The primary structure comprises 647 residues: Cartilage acidic protein 1 (647 aa).

A signal peptide spans 1–30 (MMLPADFFVPVSKMMLLALLLSIIICCGGA). An FG-GAP 1; atypical repeat occupies 48–90 (DYDSNPTQLNYGVAITDVDNDGDFEVVVAGYNGPNLVLKYIKE). One copy of the FG-GAP 2; atypical repeat lies at 107–149 (YALRDRQGNAIGVAACDIDGDGREEIYFLNTNNAFSGIATYSD). One copy of the FG-GAP 3; atypical repeat lies at 285-335 (TGVDDVYQHGRGVALADFNRDGKVDIVYGNWNGPHRLFLQMNTNGKVRFRD). The FG-GAP 4; atypical repeat unit spans residues 397 to 439 (GDASEPDGRGTGGAVTDFDGDGMLDLILSHGESMAQPLSVFKG). The EGF-like domain maps to 561 to 607 (DTDECIQFPFVCPREKPVCINTYGGYKCRPNRRCSRGFEPNEDGTAC). 3 disulfides stabilise this stretch: Cys565–Cys579, Cys572–Cys588, and Cys594–Cys607.

It localises to the secreted. Its subcellular location is the extracellular space. The protein localises to the extracellular matrix. This is Cartilage acidic protein 1 (crtac1) from Xenopus tropicalis (Western clawed frog).